We begin with the raw amino-acid sequence, 245 residues long: Bis(5'-nucleosyl)-tetraphosphatase PrpE [asymmetrical] (245 aa).

This sequence belongs to the PrpE family. Ni(2+) serves as cofactor.

It carries out the reaction P(1),P(4)-bis(5'-guanosyl) tetraphosphate + H2O = GMP + GTP + 2 H(+). In terms of biological role, asymmetrically hydrolyzes Ap4p to yield AMP and ATP. This chain is Bis(5'-nucleosyl)-tetraphosphatase PrpE [asymmetrical], found in Geobacillus thermodenitrificans (strain NG80-2).